The sequence spans 351 residues: uncharacterized protein (351 aa).

A signal peptide spans 1–27; sequence MKNKKRVLIASSLSCAILLLSAATTQA. Residues 28-71 form a disordered region; sequence NSAHKDSQDQNKKEHVDKSQQKDKRNVTNKDKNSTVPDDIGKNG. Basic and acidic residues predominate over residues 30–60; it reads AHKDSQDQNKKEHVDKSQQKDKRNVTNKDKN.

Belongs to the aerolysin family.

This is an uncharacterized protein from Staphylococcus aureus (strain N315).